The chain runs to 87 residues: U3-theraphotoxin-Hhn1a 17 (87 aa).

The first 24 residues, 1-24 (MVNVKASMFLTFAGLVLLFVVCYA), serve as a signal peptide directing secretion. Residues 25 to 52 (SESEEKEFPKEMLSSIFAVDNDFKQEER) constitute a propeptide that is removed on maturation. Intrachain disulfides connect C54–C67, C61–C72, and C66–C79.

This sequence belongs to the neurotoxin 10 (Hwtx-1) family. 51 (Hntx-8) subfamily. Hntx-8 sub-subfamily. Expressed by the venom gland.

The protein localises to the secreted. In terms of biological role, ion channel inhibitor. This chain is U3-theraphotoxin-Hhn1a 17, found in Cyriopagopus hainanus (Chinese bird spider).